A 226-amino-acid polypeptide reads, in one-letter code: Survival motor neuron protein (226 aa).

Residues A35–E44 show a composition bias toward basic and acidic residues. Positions A35–V68 are disordered. The 60-residue stretch at S69 to R128 folds into the Tudor domain. The segment at D137–P172 is disordered. The span at K154–R163 shows a compositional bias: basic residues. The interval S159 to K226 is required for homodimerization.

The protein belongs to the SMN family. As to quaternary structure, homodimer (via C-terminal region). Component of the core survival motor neuron (SMN) complex composed of Smn, Gem2, Gem3, rig/Gem5 and one of 3 almost identical Gem4 paralogs encoded by Glos/Gem4a, Gem4b or Gem4c. Interacts with Gem3 (via C-terminus); the interaction is direct and stabilizes Smn. Part of a minimal SMN complex composed of Smn and Gem2 only; this complex is active in UsnRNP assembly. The SMN complex associates with the entire set of spliceosomal snRNP Sm proteins, SmB, SmD1, SmD2, SmD3, SmE, SmF and SmG, and with the snRNP-specific proteins snRNP-U1-70K, U2A, snf/U1A and U5-116KD. Interacts with Glos/Gem4a; the interaction is probably indirect. Interacts with Sbat and Vlet; Sbat and Vlet, along with Hez, may form an accessory subcomplex involved in SMN complex function. Interacts weakly with Gem3. Interacts with SmB and SmD1; the interaction is favored by methylation of the Sm proteins. Interacts with Actn; the interaction occurs in thoracic tissues and in adult flies. Interacts with Rpp20. Interacts with msk and Snup; these interactions are RNA-dependent. As to expression, in late first instar larvae, expressed in pNBs. Expression increases as the pNBs enlarge, with the highest accumulation observed in dividing pNBs of second and third instar larvae. Enriched in type ID (thoracic and brain lobe), type IA and all the mira-expressing NBs of the brain lobes. In larvae, also expressed in muscle fibers. In larval and adult testis, expressed in germline stem cells and gonialblast, expression decreases as cells differentiate into cysts and spermatocytes. In adult fly thorax, expressed in the IFMs. In adult ovary, expressed in germline stem cells, cystoblasts, follicle cells, nurse cells and oocyte (at protein level). Also expressed in larval salivary glands.

The protein resides in the cytoplasm. The protein localises to the nucleus. Its subcellular location is the U-body. It is found in the gem. It localises to the cajal body. The protein resides in the myofibril. The protein localises to the sarcomere. Its subcellular location is the i band. It is found in the z line. Core component of the survival motor neuron (SMN) complex that plays an essential role in spliceosomal small nuclear ribonucleoprotein (snRNP) assembly in the cytoplasm, is required for pre-mRNA splicing in the nucleus and acts as a chaperone that discriminates target and non-target RNAs of Sm proteins. A major component of nuclear bodies known as gems (gemini of Cajal bodies) thought to be storage depots of excess SMN complexes. Required for normal expression of spliceosomal snRNAs and for U12 intron splicing. Required in cholinergic neurons, but not in motor neurons, to ensure correct splicing and proper levels of stas mRNA and normal neurotransmitter release by motor neurons. However, Smn is required in motor neurons, but not in cholinergic neurons, for normal motor behavior but plays no role in synaptic transmission according to a report. In both muscle and neurons, required for the formation of a normal neuromuscular junction (NMJ) structure. Plays a neuron-specific role in long-term homeostatic compensation at the larval NMJ. In the thorax of adult flies, required for Act88F, an indirect flight muscle (IFM)-specific actin, expression and for proper IFM myofibril formation. In nurse cells, oocytes and follicle cells, required to maintain normal organization of nuclear compartments including chromosomes, nucleoli, Cajal bodies, histone locus bodies and heterochromatin. Required for the functional integrity of the cytoplasmic U snRNP body (U body) and P body. Required in dividing postembryonic neuroblasts (pNBs) for the correct basal localization of mira. The tight regulation of its expression is critical for stem cell division, proliferation and differentiation in male germline and developing central nervous system (CNS). Required for tracheal terminal cell lumen formation. This chain is Survival motor neuron protein, found in Drosophila melanogaster (Fruit fly).